The following is a 176-amino-acid chain: Inorganic pyrophosphatase (176 aa).

Substrate-binding residues include Lys31, Arg45, and Tyr57. Mg(2+) is bound by residues Asp67, Asp72, and Asp104. Tyr141 contacts substrate.

This sequence belongs to the PPase family. As to quaternary structure, homohexamer. Mg(2+) is required as a cofactor.

The protein localises to the cytoplasm. The catalysed reaction is diphosphate + H2O = 2 phosphate + H(+). Its function is as follows. Catalyzes the hydrolysis of inorganic pyrophosphate (PPi) forming two phosphate ions. In Methanopyrus kandleri (strain AV19 / DSM 6324 / JCM 9639 / NBRC 100938), this protein is Inorganic pyrophosphatase.